We begin with the raw amino-acid sequence, 344 residues long: MAPEEDSLALAEAWNHGFGFIKTSIVKTAVELEIPDILESRGAPVSIPELATAVDCSADRIYRVMRFLAYHGIFKRTKPPPESTEGGSVYYAQTPVSRRLTRENLGPFVLLQGTMREPSGCVTAETLRTSKRPGVVNENESDHLYEDPVFSMKVFRDAMASHARMTTAAVIENYGEGFQGVGSLVDVGGSYGMALSMLVKAFPWLRGICFDLPEVVARASPLKGVEFVGGTMFESIPKADVVMLMFVLHNWSDEECVEILKRCKDAVSKDKGKVIIIDAVIDEDGDGDEFTGARLGLDVTMMATMFEGRERTYVEWARIINEAGFRRHVVKNIKTLESVIEAYP.

Asp-211 serves as a coordination point for S-adenosyl-L-methionine. The active-site Proton acceptor is the His-249.

The protein belongs to the class I-like SAM-binding methyltransferase superfamily. Cation-independent O-methyltransferase family. Homodimer.

The enzyme catalyses apigenin + S-adenosyl-L-methionine = genkwanin + S-adenosyl-L-homocysteine + H(+). It carries out the reaction luteolin + S-adenosyl-L-methionine = luteolin 7-methyl ether + S-adenosyl-L-homocysteine + H(+). The catalysed reaction is quercetin + S-adenosyl-L-methionine = rhamnetin + S-adenosyl-L-homocysteine + H(+). It catalyses the reaction (2S)-naringenin + S-adenosyl-L-methionine = (2S)-sakuranetin + S-adenosyl-L-homocysteine + H(+). The enzyme catalyses kaempferol + S-adenosyl-L-methionine = kaempferol 7-methyl ether + S-adenosyl-L-homocysteine + H(+). It carries out the reaction isorhamnetin + S-adenosyl-L-methionine = rhamnacene + S-adenosyl-L-homocysteine + H(+). The catalysed reaction is 4',7,8-trihydroxyflavone + S-adenosyl-L-methionine = 4',8-dihydroxy-7-methoxyflavone + S-adenosyl-L-homocysteine. It catalyses the reaction scutellarein + S-adenosyl-L-methionine = scutellarein 7-methyl ether + S-adenosyl-L-homocysteine. The protein operates within flavonoid metabolism. Functionally, flavonoid 7-O-methyltransferase involved in the biosynthesis of polymethoxylated flavonoids natural products such as pebrellin, aroma compounds which contribute to the flavor of peppermint, and exhibit pharmacological activities such as anti-allergic, anti-oxidant, antibacterial, anti-proliferative, and anti-inflammatory effects. Catalyzes S-adenosylmethionine-dependent regioselective 7-O-methylation of flavonoids; active on various hydroxylated flavonoid substrates, including luteolin (LUT), quercetin, kaempferol, isorhamnetin, apigenin (API), scutellarein (6-hydroxy-apigenin, 6-OH-API, SCU), 7,8,4'-trihydroxy-flavone and naringenin (NAR), and, with a lower efficiency, 7,8,3',4'-tetrahydroxy-flavone, taxifolin, hesperetin and genistein. The polypeptide is Flavonoid 7-O-methyltransferase 1A (Mentha piperita (Peppermint)).